The primary structure comprises 137 residues: Large ribosomal subunit protein uL16 (137 aa).

It belongs to the universal ribosomal protein uL16 family. In terms of assembly, part of the 50S ribosomal subunit.

Functionally, binds 23S rRNA and is also seen to make contacts with the A and possibly P site tRNAs. The protein is Large ribosomal subunit protein uL16 of Pseudomonas putida (strain ATCC 47054 / DSM 6125 / CFBP 8728 / NCIMB 11950 / KT2440).